Reading from the N-terminus, the 548-residue chain is MDSQRNLLIIALLFVSFMIWQAWEQDKNPQPQQQTTQTTTTAAGSAADQGVPASGQGKLITVKTDVLELTINTNGGDIEQALLLAYPKTLKSTEPFQLLETTPQFVYQAQSGLTGRDGPDNPANGPRPLYSVDKEAFVLADSQDEIVIPLTYTDKAGNVFTKTFTLKRGGYAVNVGYSVQNASEKPLEVSTFGQLKQTAALPTSRDTQTGGLSTMHTFRGAAFSTSDTKYEKYKFDTILDNENLNVSTKNGWVAMLQQYFTTAWVPQNNGTNNFYTANLGNGIVAIGYKSQPVLVQPGQTDKLQSVLWVGPAIQDKMAAVAPHLDLTVDYGWLWFISQPLFKLLKFIHSFLGNWGFSIIVITFIVRGIMYPLTKAQYTSMAKMRMLQPKIQAMRERLGDDKQRQSQEMMALYKAEKVNPLGGCFPLIIQMPIFLALYYMLSASVELRHAPFILWIHDLSAQDPYYILPIIMGATMFFIQKMSPTTVTDPMQQKIMTFMPVIFTVFFLWFPSGLVVYYIVSNLVTIIQQQLIYRGLEKRGLHSREKKKS.

A helical membrane pass occupies residues 6–26 (NLLIIALLFVSFMIWQAWEQD). Residues 28-52 (NPQPQQQTTQTTTTAAGSAADQGVP) form a disordered region. Residues 29-41 (PQPQQQTTQTTTT) show a composition bias toward low complexity. A run of 4 helical transmembrane segments spans residues 345-365 (KFIH…TFIV), 420-440 (LGGC…YYML), 458-478 (LSAQ…MFFI), and 499-519 (PVIF…YYIV).

The protein belongs to the OXA1/ALB3/YidC family. Type 1 subfamily. In terms of assembly, interacts with the Sec translocase complex via SecD. Specifically interacts with transmembrane segments of nascent integral membrane proteins during membrane integration.

The protein resides in the cell inner membrane. Functionally, required for the insertion and/or proper folding and/or complex formation of integral membrane proteins into the membrane. Involved in integration of membrane proteins that insert both dependently and independently of the Sec translocase complex, as well as at least some lipoproteins. Aids folding of multispanning membrane proteins. This is Membrane protein insertase YidC from Klebsiella pneumoniae (strain 342).